A 250-amino-acid chain; its full sequence is Proteasome subunit alpha type-4-2 (250 aa).

The 26S proteasome consists of a 20S proteasome core and two 19S regulatory subunits. The 20S proteasome core is composed of 28 subunits that are arranged in four stacked rings, resulting in a barrel-shaped structure. The two end rings are each formed by seven alpha subunits, and the two central rings are each formed by seven beta subunits. The catalytic chamber with the active sites is on the inside of the barrel.

The protein resides in the cytoplasm. The protein localises to the nucleus. In terms of biological role, the proteasome is a multicatalytic proteinase complex which is characterized by its ability to cleave peptides with Arg, Phe, Tyr, Leu, and Glu adjacent to the leaving group at neutral or slightly basic pH. The proteasome has an ATP-dependent proteolytic activity. This chain is Proteasome subunit alpha type-4-2, found in Oryza sativa subsp. indica (Rice).